The primary structure comprises 257 residues: Tryptophan synthase alpha chain (257 aa).

Catalysis depends on proton acceptor residues Glu47 and Asp58.

Belongs to the TrpA family. In terms of assembly, tetramer of two alpha and two beta chains.

It catalyses the reaction (1S,2R)-1-C-(indol-3-yl)glycerol 3-phosphate + L-serine = D-glyceraldehyde 3-phosphate + L-tryptophan + H2O. The protein operates within amino-acid biosynthesis; L-tryptophan biosynthesis; L-tryptophan from chorismate: step 5/5. The alpha subunit is responsible for the aldol cleavage of indoleglycerol phosphate to indole and glyceraldehyde 3-phosphate. This is Tryptophan synthase alpha chain from Listeria monocytogenes serotype 4b (strain F2365).